The sequence spans 220 residues: Nitrile hydratase subunit beta (220 aa).

This sequence belongs to the nitrile hydratase subunit beta family. Heterodimer of an alpha and a beta chain.

The enzyme catalyses an aliphatic primary amide = an aliphatic nitrile + H2O. Functionally, NHase catalyzes the hydration of various nitrile compounds to the corresponding amides. The sequence is that of Nitrile hydratase subunit beta (nthB) from Pseudomonas chlororaphis (Pseudomonas aureofaciens).